A 497-amino-acid polypeptide reads, in one-letter code: Taxane 10-beta-hydroxylase (497 aa).

Cysteine 443 is a heme binding site.

The protein belongs to the cytochrome P450 family. It depends on heme as a cofactor.

The catalysed reaction is taxa-4(20),11-dien-5alpha-yl acetate + reduced [NADPH--hemoprotein reductase] + O2 = 10beta-hydroxytaxa-4(20),11-dien-5alpha-yl acetate + oxidized [NADPH--hemoprotein reductase] + H2O + H(+). The protein operates within alkaloid biosynthesis; taxol biosynthesis; 10-deacetyl-2-debenzoylbaccatin III from taxa-4(20),11-dien-5alpha-ol: step 2/3. In terms of biological role, involved in the transformation of a taxadienyl acetate by hydroxylation at C10 to yield taxadien-5-alpha-acetoxy-10-beta-ol. The sequence is that of Taxane 10-beta-hydroxylase (CYP725A1) from Taxus cuspidata (Japanese yew).